Reading from the N-terminus, the 159-residue chain is Small ribosomal subunit protein uS9 (159 aa).

Belongs to the universal ribosomal protein uS9 family.

The polypeptide is Small ribosomal subunit protein uS9 (Methylocella silvestris (strain DSM 15510 / CIP 108128 / LMG 27833 / NCIMB 13906 / BL2)).